The following is a 353-amino-acid chain: Photosystem II D2 protein (353 aa).

Thr-2 is subject to N-acetylthreonine. Thr-2 is modified (phosphothreonine). The helical transmembrane segment at 41–61 threads the bilayer; it reads CAYFALGGWFTGTTFVTSWYT. His-118 is a binding site for chlorophyll a. Residues 125 to 141 traverse the membrane as a helical segment; sequence GFMLRQFELARSVQLRP. Pheophytin a-binding residues include Gln-130 and Asn-143. Residues 153 to 166 form a helical membrane-spanning segment; that stretch reads VFVSVFLIYPLGQS. Residue His-198 participates in chlorophyll a binding. A helical membrane pass occupies residues 208 to 228; the sequence is AALLCAIHGATVENTLFEDGD. His-215 and Phe-262 together coordinate a plastoquinone. Position 215 (His-215) interacts with Fe cation. His-269 lines the Fe cation pocket. A helical membrane pass occupies residues 279-295; it reads GLWMSAIGVVGLALNLR.

This sequence belongs to the reaction center PufL/M/PsbA/D family. In terms of assembly, PSII is composed of 1 copy each of membrane proteins PsbA, PsbB, PsbC, PsbD, PsbE, PsbF, PsbH, PsbI, PsbJ, PsbK, PsbL, PsbM, PsbT, PsbX, PsbY, PsbZ, Psb30/Ycf12, at least 3 peripheral proteins of the oxygen-evolving complex and a large number of cofactors. It forms dimeric complexes. It depends on The D1/D2 heterodimer binds P680, chlorophylls that are the primary electron donor of PSII, and subsequent electron acceptors. It shares a non-heme iron and each subunit binds pheophytin, quinone, additional chlorophylls, carotenoids and lipids. There is also a Cl(-1) ion associated with D1 and D2, which is required for oxygen evolution. The PSII complex binds additional chlorophylls, carotenoids and specific lipids. as a cofactor.

The protein resides in the plastid. It is found in the chloroplast thylakoid membrane. It catalyses the reaction 2 a plastoquinone + 4 hnu + 2 H2O = 2 a plastoquinol + O2. In terms of biological role, photosystem II (PSII) is a light-driven water:plastoquinone oxidoreductase that uses light energy to abstract electrons from H(2)O, generating O(2) and a proton gradient subsequently used for ATP formation. It consists of a core antenna complex that captures photons, and an electron transfer chain that converts photonic excitation into a charge separation. The D1/D2 (PsbA/PsbD) reaction center heterodimer binds P680, the primary electron donor of PSII as well as several subsequent electron acceptors. D2 is needed for assembly of a stable PSII complex. The chain is Photosystem II D2 protein from Cycas taitungensis (Prince sago).